We begin with the raw amino-acid sequence, 431 residues long: Chaperone SurA (431 aa).

Positions 1–20 are cleaved as a signal peptide; it reads MKNWRTLILGLALSASTAFA. PpiC domains are found at residues 171-272 and 282-382; these read NDEL…KVND and VTET…QLLD.

It is found in the periplasm. It catalyses the reaction [protein]-peptidylproline (omega=180) = [protein]-peptidylproline (omega=0). Functionally, chaperone involved in the correct folding and assembly of outer membrane proteins. Recognizes specific patterns of aromatic residues and the orientation of their side chains, which are found more frequently in integral outer membrane proteins. May act in both early periplasmic and late outer membrane-associated steps of protein maturation. This is Chaperone SurA from Pectobacterium atrosepticum (strain SCRI 1043 / ATCC BAA-672) (Erwinia carotovora subsp. atroseptica).